A 96-amino-acid polypeptide reads, in one-letter code: UPF0235 protein Ent638_3359 (96 aa).

This sequence belongs to the UPF0235 family.

This is UPF0235 protein Ent638_3359 from Enterobacter sp. (strain 638).